The sequence spans 215 residues: Adenylate kinase (215 aa).

ATP is bound at residue 10-15; sequence GAGKGT. Residues 30-59 form an NMP region; it reads STGDMFRKAIKDETDLGKEAKSYMDRGELV. AMP is bound by residues threonine 31, arginine 36, 57–59, 85–88, and glutamine 92; these read ELV and GFPR. The interval 126–163 is LID; that stretch reads GRRICEKCGTTYHLVFNPPKVDGICDIDGGKLYQREDD. Arginine 127 serves as a coordination point for ATP. Positions 130 and 133 each coordinate Zn(2+). 136-137 lines the ATP pocket; that stretch reads TY. 2 residues coordinate Zn(2+): cysteine 150 and aspartate 153. 2 residues coordinate AMP: arginine 160 and arginine 171. Lysine 199 provides a ligand contact to ATP.

The protein belongs to the adenylate kinase family. As to quaternary structure, monomer.

The protein resides in the cytoplasm. The enzyme catalyses AMP + ATP = 2 ADP. Its pathway is purine metabolism; AMP biosynthesis via salvage pathway; AMP from ADP: step 1/1. Functionally, catalyzes the reversible transfer of the terminal phosphate group between ATP and AMP. Plays an important role in cellular energy homeostasis and in adenine nucleotide metabolism. This chain is Adenylate kinase, found in Staphylococcus epidermidis (strain ATCC 35984 / DSM 28319 / BCRC 17069 / CCUG 31568 / BM 3577 / RP62A).